A 237-amino-acid polypeptide reads, in one-letter code: Phosphoribosylaminoimidazole-succinocarboxamide synthase (237 aa).

Belongs to the SAICAR synthetase family.

It catalyses the reaction 5-amino-1-(5-phospho-D-ribosyl)imidazole-4-carboxylate + L-aspartate + ATP = (2S)-2-[5-amino-1-(5-phospho-beta-D-ribosyl)imidazole-4-carboxamido]succinate + ADP + phosphate + 2 H(+). The protein operates within purine metabolism; IMP biosynthesis via de novo pathway; 5-amino-1-(5-phospho-D-ribosyl)imidazole-4-carboxamide from 5-amino-1-(5-phospho-D-ribosyl)imidazole-4-carboxylate: step 1/2. This chain is Phosphoribosylaminoimidazole-succinocarboxamide synthase, found in Escherichia coli O7:K1 (strain IAI39 / ExPEC).